The primary structure comprises 85 residues: MNFFNYFRSQKKKSAQVAKERLQVIVARERVHRDGPDYLPRLQEEILNVIRKYVQVDEDAVSIQLERDGDCEVLELNVTLPEHKA.

This sequence belongs to the MinE family.

Prevents the cell division inhibition by proteins MinC and MinD at internal division sites while permitting inhibition at polar sites. This ensures cell division at the proper site by restricting the formation of a division septum at the midpoint of the long axis of the cell. This chain is Cell division topological specificity factor, found in Thioalkalivibrio sulfidiphilus (strain HL-EbGR7).